A 214-amino-acid chain; its full sequence is Imidazole glycerol phosphate synthase subunit HisH 2 (214 aa).

A Glutamine amidotransferase type-1 domain is found at Lys2–Gly210. The Nucleophile role is filled by Cys82. Residues His185 and Glu187 contribute to the active site.

Heterodimer of HisH and HisF.

It localises to the cytoplasm. The enzyme catalyses 5-[(5-phospho-1-deoxy-D-ribulos-1-ylimino)methylamino]-1-(5-phospho-beta-D-ribosyl)imidazole-4-carboxamide + L-glutamine = D-erythro-1-(imidazol-4-yl)glycerol 3-phosphate + 5-amino-1-(5-phospho-beta-D-ribosyl)imidazole-4-carboxamide + L-glutamate + H(+). It carries out the reaction L-glutamine + H2O = L-glutamate + NH4(+). Its pathway is amino-acid biosynthesis; L-histidine biosynthesis; L-histidine from 5-phospho-alpha-D-ribose 1-diphosphate: step 5/9. Its function is as follows. IGPS catalyzes the conversion of PRFAR and glutamine to IGP, AICAR and glutamate. The HisH subunit provides the glutamine amidotransferase activity that produces the ammonia necessary to HisF for the synthesis of IGP and AICAR. This Vibrio vulnificus (strain YJ016) protein is Imidazole glycerol phosphate synthase subunit HisH 2 (hisH2).